The primary structure comprises 230 residues: Oxaloacetate tautomerase FAHD1, mitochondrial (230 aa).

The N-terminal 26 residues, 1–26, are a transit peptide targeting the mitochondrion; the sequence is MAAAAAAAAQRLLAASTKIIGVGRNY. E73, E75, and D104 together coordinate Mg(2+).

This sequence belongs to the FAH family. Mg(2+) is required as a cofactor. It depends on Mn(2+) as a cofactor.

The protein localises to the mitochondrion. The catalysed reaction is oxaloacetate = enol-oxaloacetate. In terms of biological role, tautomerase that converts enol-oxaloacetate, a strong inhibitor of succinate dehydrogenase, to the physiological keto form of oxaloacetate. The chain is Oxaloacetate tautomerase FAHD1, mitochondrial from Oryza sativa subsp. japonica (Rice).